Reading from the N-terminus, the 676-residue chain is DNA ligase (676 aa).

NAD(+) is bound by residues 35–39, 84–85, and Glu118; these read DYEFD and SL. The active-site N6-AMP-lysine intermediate is Lys120. Residues Arg141, Glu184, Lys299, and Lys323 each coordinate NAD(+). Residues Cys417, Cys420, Cys435, and Cys441 each coordinate Zn(2+). A BRCT domain is found at 600–676; the sequence is LINRNFEGVN…ISEDEFNAML (77 aa).

This sequence belongs to the NAD-dependent DNA ligase family. LigA subfamily. Mg(2+) serves as cofactor. It depends on Mn(2+) as a cofactor.

The enzyme catalyses NAD(+) + (deoxyribonucleotide)n-3'-hydroxyl + 5'-phospho-(deoxyribonucleotide)m = (deoxyribonucleotide)n+m + AMP + beta-nicotinamide D-nucleotide.. DNA ligase that catalyzes the formation of phosphodiester linkages between 5'-phosphoryl and 3'-hydroxyl groups in double-stranded DNA using NAD as a coenzyme and as the energy source for the reaction. It is essential for DNA replication and repair of damaged DNA. This is DNA ligase from Chlorobium phaeobacteroides (strain DSM 266 / SMG 266 / 2430).